A 370-amino-acid chain; its full sequence is Proto-oncogene Wnt-1 (370 aa).

A signal peptide spans 1 to 27 (MGLWALLPSWVSTTLLLALTALPAALA). N-linked (GlcNAc...) asparagine glycosylation is present at Asn-29. Cystine bridges form between Cys-93/Cys-104, Cys-143/Cys-151, Cys-153/Cys-170, Cys-218/Cys-232, Cys-220/Cys-227, Cys-299/Cys-330, Cys-315/Cys-325, Cys-329/Cys-369, Cys-345/Cys-360, Cys-347/Cys-357, and Cys-352/Cys-353. Residue Ser-224 is the site of O-palmitoleoyl serine; by PORCN attachment. N-linked (GlcNAc...) asparagine glycans are attached at residues Asn-316 and Asn-346. N-linked (GlcNAc...) asparagine glycosylation is present at Asn-359.

It belongs to the Wnt family. As to quaternary structure, forms a soluble 1:1 complex with AFM; this prevents oligomerization and is required for prolonged biological activity. The complex with AFM may represent the physiological form in body fluids. Interacts with PORCN. Interacts with RSPO1, RSPO2 and RSPO3. Interacts with WLS. In terms of processing, palmitoleoylation is required for efficient binding to frizzled receptors. Palmitoleoylation is necessary for proper trafficking to cell surface. Depalmitoleoylated by NOTUM, leading to inhibit Wnt signaling pathway. Testis and mid-gestational embryos. In the testis, detected only in postmeiotic germ cells undergoing differentiation from round spermatids into mature spermatozoa. In the embryos, expression is restricted to the developing CNS in regions of the neural tube other than the telencephalon. Expressed in osteoblast; expression levels increase with advancing osteoblast differentiation. Expressed in the brain, femur, spleen, and hematopoietic bone marrow.

Its subcellular location is the secreted. The protein localises to the extracellular space. It localises to the extracellular matrix. Functionally, ligand for members of the frizzled family of seven transmembrane receptors. Acts in the canonical Wnt signaling pathway by promoting beta-catenin-dependent transcriptional activation. In some developmental processes, is also a ligand for the coreceptor RYK, thus triggering Wnt signaling. Plays an essential role in the development of the embryonic brain and central nervous system (CNS). Has a role in osteoblast function, bone development and bone homeostasis. The sequence is that of Proto-oncogene Wnt-1 (Wnt1) from Mus musculus (Mouse).